The following is a 178-amino-acid chain: Large ribosomal subunit protein uL5 (178 aa).

The protein belongs to the universal ribosomal protein uL5 family. In terms of assembly, part of the 50S ribosomal subunit; part of the 5S rRNA/L5/L18/L25 subcomplex. Contacts the 5S rRNA and the P site tRNA. Forms a bridge to the 30S subunit in the 70S ribosome.

Its function is as follows. This is one of the proteins that bind and probably mediate the attachment of the 5S RNA into the large ribosomal subunit, where it forms part of the central protuberance. In the 70S ribosome it contacts protein S13 of the 30S subunit (bridge B1b), connecting the 2 subunits; this bridge is implicated in subunit movement. Contacts the P site tRNA; the 5S rRNA and some of its associated proteins might help stabilize positioning of ribosome-bound tRNAs. The chain is Large ribosomal subunit protein uL5 from Psychrobacter cryohalolentis (strain ATCC BAA-1226 / DSM 17306 / VKM B-2378 / K5).